The chain runs to 336 residues: Isopentenyl-diphosphate delta-isomerase (336 aa).

Residue 5 to 6 coordinates substrate; the sequence is RK. FMN-binding positions include 60–62, S90, and N117; that span reads AMT. Q147 lines the substrate pocket. E148 serves as a coordination point for Mg(2+). FMN contacts are provided by residues K179, S204, T209, 253 to 255, and 274 to 275; these read GVR and SR.

This sequence belongs to the IPP isomerase type 2 family. In terms of assembly, homooctamer. Dimer of tetramers. It depends on FMN as a cofactor. The cofactor is NADPH. Mg(2+) serves as cofactor.

Its subcellular location is the cytoplasm. The enzyme catalyses isopentenyl diphosphate = dimethylallyl diphosphate. Its function is as follows. Involved in the biosynthesis of isoprenoids. Catalyzes the 1,3-allylic rearrangement of the homoallylic substrate isopentenyl (IPP) to its allylic isomer, dimethylallyl diphosphate (DMAPP). The chain is Isopentenyl-diphosphate delta-isomerase from Streptococcus pneumoniae (strain ATCC BAA-255 / R6).